A 492-amino-acid polypeptide reads, in one-letter code: Adenylyltransferase and sulfurtransferase uba4 (492 aa).

ATP is bound by residues Gly-99, Asp-120, 127-131 (SNLHR), Lys-144, and 188-189 (DN). Residues Cys-237 and Cys-240 each contribute to the Zn(2+) site. Cys-254 acts as the Glycyl thioester intermediate; for adenylyltransferase activity in catalysis. Cys-317 and Cys-320 together coordinate Zn(2+). The 113-residue stretch at 378 to 490 (GSKEPTIIDV…WREQIDPDWP (113 aa)) folds into the Rhodanese domain. The Cysteine persulfide intermediate; for sulfurtransferase activity role is filled by Cys-445.

In the N-terminal section; belongs to the HesA/MoeB/ThiF family. UBA4 subfamily. Requires Zn(2+) as cofactor.

The protein resides in the cytoplasm. Its subcellular location is the cytosol. It catalyses the reaction [molybdopterin-synthase sulfur-carrier protein]-C-terminal Gly-Gly + ATP + H(+) = [molybdopterin-synthase sulfur-carrier protein]-C-terminal Gly-Gly-AMP + diphosphate. The enzyme catalyses [molybdopterin-synthase sulfur-carrier protein]-C-terminal Gly-Gly-AMP + S-sulfanyl-L-cysteinyl-[cysteine desulfurase] + AH2 = [molybdopterin-synthase sulfur-carrier protein]-C-terminal-Gly-aminoethanethioate + L-cysteinyl-[cysteine desulfurase] + A + AMP + 2 H(+). The protein operates within tRNA modification; 5-methoxycarbonylmethyl-2-thiouridine-tRNA biosynthesis. Its pathway is cofactor biosynthesis; molybdopterin biosynthesis. Plays a central role in 2-thiolation of mcm(5)S(2)U at tRNA wobble positions of cytosolic tRNA(Lys), tRNA(Glu) and tRNA(Gln). Also essential during biosynthesis of the molybdenum cofactor. Acts by mediating the C-terminal thiocarboxylation of sulfur carriers urm1 and mocs2a. Its N-terminus first activates urm1 and mocs2a as acyl-adenylates (-COAMP), then the persulfide sulfur on the catalytic cysteine is transferred to urm1 and mocs2a to form thiocarboxylation (-COSH) of their C-terminus. The reaction probably involves hydrogen sulfide that is generated from the persulfide intermediate and that acts as a nucleophile towards urm1 and mocs2a. Subsequently, a transient disulfide bond is formed. Does not use thiosulfate as sulfur donor; nfs1 probably acting as a sulfur donor for thiocarboxylation reactions. The protein is Adenylyltransferase and sulfurtransferase uba4 of Aspergillus clavatus (strain ATCC 1007 / CBS 513.65 / DSM 816 / NCTC 3887 / NRRL 1 / QM 1276 / 107).